We begin with the raw amino-acid sequence, 317 residues long: HTH-type transcriptional regulator MetR (317 aa).

One can recognise an HTH lysR-type domain in the interval 1–59 (MIEVKHLKTLQALRNCGSLAAAAATLHQTQSALSHQFSDLEQRLGFRLFVRKSQPLRFT). The H-T-H motif DNA-binding region spans 19 to 38 (LAAAAATLHQTQSALSHQFS).

Belongs to the LysR transcriptional regulatory family.

Its subcellular location is the cytoplasm. Control of the last step in methionine biosynthesis; MetR is a positive activator of the metA, metE and metH genes. It is also a negative regulator of its own expression. This is HTH-type transcriptional regulator MetR (metR) from Escherichia coli O157:H7.